We begin with the raw amino-acid sequence, 515 residues long: MRKISVFDTTLRDGEQSAGVNLNFEEKMEIAKQLERLGVDIIEAGFPASSQGDFQSVKAIAETVKGSSVTGLARSVQKDIDAAWEALKSAEEPRIHLFIATSPIHMEHKLRMTPEQVIEKAVESVKYAASRFKHVQWSAEDASRSDFPFLAQIIEAVIQAGATVINLPDTVGYTTPQEIKRMFQYMKQNVPSIDKVSLSTHNHDDLGMAVANSLAAIQGGADQVECTINGIGERAGNASLEEIAVALNIRKDHYETETGLILKEIKRTSSLVSKLTGMVVPNNKAVVGANAFAHESGIHQDGVLKNKQTYEIITPEMVGVSSNSMVLGKHSGRHAFKTKVQELGFTGTDEQLNNIFKAFKDLADKKKEITEDDLFALMTEQTVGGETNHYELQTLQVNYGSNLTNTATITMKLPSGEVAEEAATGSGSVEAIYNTLERLLDAPVKLLDYRIQSITGGRDALADVYVQMDYQGVVSSGRGTAHDVLEASAKAYLNAVNRTINRKKYAEVYGSKVEV.

One can recognise a Pyruvate carboxyltransferase domain in the interval 4–266 (ISVFDTTLRD…ETGLILKEIK (263 aa)). The Mn(2+) site is built by aspartate 13, histidine 201, histidine 203, and asparagine 237. Positions 391 to 515 (ELQTLQVNYG…AEVYGSKVEV (125 aa)) are regulatory domain.

It belongs to the alpha-IPM synthase/homocitrate synthase family. LeuA type 1 subfamily. Homodimer. Requires Mn(2+) as cofactor.

It is found in the cytoplasm. It carries out the reaction 3-methyl-2-oxobutanoate + acetyl-CoA + H2O = (2S)-2-isopropylmalate + CoA + H(+). It participates in amino-acid biosynthesis; L-leucine biosynthesis; L-leucine from 3-methyl-2-oxobutanoate: step 1/4. Catalyzes the condensation of the acetyl group of acetyl-CoA with 3-methyl-2-oxobutanoate (2-ketoisovalerate) to form 3-carboxy-3-hydroxy-4-methylpentanoate (2-isopropylmalate). The protein is 2-isopropylmalate synthase of Halalkalibacterium halodurans (strain ATCC BAA-125 / DSM 18197 / FERM 7344 / JCM 9153 / C-125) (Bacillus halodurans).